The chain runs to 219 residues: Tegument protein UL14 (219 aa).

A disordered region spans residues 161-219 (ANGPSRIGSHPTYTPTPTGPPGAPAAPLSRTPPSPAPPTGPATDPASASGFARDYPDGE). Pro residues predominate over residues 177–200 (PTGPPGAPAAPLSRTPPSPAPPTG).

It belongs to the alphaherpesvirinae HHV-1 UL14 protein family. In terms of assembly, interacts with UL51. Post-translationally, phosphorylated.

The protein resides in the virion tegument. It is found in the host cytoplasm. The protein localises to the host nucleus. In terms of biological role, contributes to the nuclear transport of the viral transcriptional activator VP16 during the early phase of infection. Therefore, participates indirectly in the regulation of the immediate-early gene expression. Additionally, seems to be important for efficient nuclear targeting of capsids. The UL51-UL14 complex regulates final viral envelopment for efficient viral replication. In Human herpesvirus 1 (strain 17) (HHV-1), this protein is Tegument protein UL14.